Consider the following 938-residue polypeptide: Isoleucine--tRNA ligase (938 aa).

The 'HIGH' region signature appears at 58–68 (PYANGNIHMGH). Glu-566 is a binding site for L-isoleucyl-5'-AMP. The short motif at 607-611 (KMSKS) is the 'KMSKS' region element. Lys-610 contacts ATP. Zn(2+)-binding residues include Cys-906, Cys-909, Cys-926, and Cys-929.

It belongs to the class-I aminoacyl-tRNA synthetase family. IleS type 1 subfamily. As to quaternary structure, monomer. Zn(2+) serves as cofactor.

It localises to the cytoplasm. It carries out the reaction tRNA(Ile) + L-isoleucine + ATP = L-isoleucyl-tRNA(Ile) + AMP + diphosphate. Its function is as follows. Catalyzes the attachment of isoleucine to tRNA(Ile). As IleRS can inadvertently accommodate and process structurally similar amino acids such as valine, to avoid such errors it has two additional distinct tRNA(Ile)-dependent editing activities. One activity is designated as 'pretransfer' editing and involves the hydrolysis of activated Val-AMP. The other activity is designated 'posttransfer' editing and involves deacylation of mischarged Val-tRNA(Ile). This chain is Isoleucine--tRNA ligase, found in Nitratidesulfovibrio vulgaris (strain ATCC 29579 / DSM 644 / CCUG 34227 / NCIMB 8303 / VKM B-1760 / Hildenborough) (Desulfovibrio vulgaris).